The sequence spans 785 residues: Probable ATP-dependent RNA helicase ddx17 (785 aa).

4 stretches are compositionally biased toward low complexity: residues 1-11 (MSYNSSNSGSG), 18-37 (SGNSSYSSTSRGGSSYGNRS), 49-95 (SYNR…YGPS), and 105-177 (GSSS…NGYS). Residues 1–233 (MSYNSSNSGS…TPSTSYNGGS (233 aa)) form a disordered region. Positions 178-191 (KPTSNYSYSNGYTG) are enriched in polar residues. Positions 192–233 (PTTNYSSYSNGYSTPPTSTSTSSSSTTTTTTTTPSTSYNGGS) are enriched in low complexity. A Q motif motif is present at residues 384 to 412 (MQFTQAPFPGYLMKEIIGAGFPNPTPIQS). One can recognise a Helicase ATP-binding domain in the interval 415–590 (WPIALKGRDI…HDFLTDHIQV (176 aa)). 428 to 435 (AKTGSGKT) contacts ATP. Positions 538–541 (DEAD) match the DEAD box motif. The region spanning 602–763 (NVRQIVEVCQ…KIPIELSNLS (162 aa)) is the Helicase C-terminal domain. Over residues 764 to 774 (VTPSTSSNTKK) the composition is skewed to polar residues. The interval 764–785 (VTPSTSSNTKKFSPYPTYSKRY) is disordered.

Belongs to the DEAD box helicase family. DDX5/DBP2 subfamily.

The protein localises to the cytoplasm. It localises to the nucleus. The catalysed reaction is ATP + H2O = ADP + phosphate + H(+). Functionally, probable ATP-dependent RNA helicase which may be involved nonsense-mediated mRNA decay and ribosome biogenesis through rRNA processing. The sequence is that of Probable ATP-dependent RNA helicase ddx17 (ddx17) from Dictyostelium discoideum (Social amoeba).